Here is a 112-residue protein sequence, read N- to C-terminus: Integration host factor subunit alpha (112 aa).

The protein belongs to the bacterial histone-like protein family. As to quaternary structure, heterodimer of an alpha and a beta chain.

Functionally, this protein is one of the two subunits of integration host factor, a specific DNA-binding protein that functions in genetic recombination as well as in transcriptional and translational control. This is Integration host factor subunit alpha from Allorhizobium ampelinum (strain ATCC BAA-846 / DSM 112012 / S4) (Agrobacterium vitis (strain S4)).